A 192-amino-acid polypeptide reads, in one-letter code: Molybdenum cofactor guanylyltransferase (192 aa).

GTP is bound by residues 10–12, Lys23, Asn51, Asp69, and Asp99; that span reads LAG. Position 99 (Asp99) interacts with Mg(2+).

This sequence belongs to the MobA family. In terms of assembly, monomer. Mg(2+) is required as a cofactor.

It is found in the cytoplasm. It catalyses the reaction Mo-molybdopterin + GTP + H(+) = Mo-molybdopterin guanine dinucleotide + diphosphate. Functionally, transfers a GMP moiety from GTP to Mo-molybdopterin (Mo-MPT) cofactor (Moco or molybdenum cofactor) to form Mo-molybdopterin guanine dinucleotide (Mo-MGD) cofactor. The protein is Molybdenum cofactor guanylyltransferase of Haemophilus influenzae (strain 86-028NP).